We begin with the raw amino-acid sequence, 259 residues long: TCF3 fusion partner homolog (259 aa).

Disordered stretches follow at residues 51-72 (GLGDSGLRERDEEEEAARGRRR) and 141-210 (EDDG…APVQ). Serine 167 is modified (phosphoserine). Residue threonine 172 is modified to Phosphothreonine. Residues serine 180 and serine 188 each carry the phosphoserine modification. Threonine 203 bears the Phosphothreonine mark. Lysine 222 is covalently cross-linked (Glycyl lysine isopeptide (Lys-Gly) (interchain with G-Cter in SUMO2)). The interval 240–259 (VSRGPDKLLPYPTLASPPFD) is disordered. The residue at position 255 (serine 255) is a Phosphoserine.

In terms of assembly, interacts with NOL3; translocates NOL3 into the nucleus and negatively regulated TFPT-induced cell death. Component of the chromatin remodeling INO80 complex; specifically part of a complex module associated with the N-terminus of INO80. Ubiquitously expressed. Abundant in the brain.

It is found in the nucleus. Appears to promote apoptosis in a p53/TP53-independent manner. Its function is as follows. Putative regulatory component of the chromatin remodeling INO80 complex which is involved in transcriptional regulation, DNA replication and probably DNA repair. In Rattus norvegicus (Rat), this protein is TCF3 fusion partner homolog (Tfpt).